The sequence spans 421 residues: ATP-dependent RNA helicase RhlB (421 aa).

The short motif at 9–37 is the Q motif element; it reads QKFSDFALHPKVVEALEKKGFHNCTPIQA. In terms of domain architecture, Helicase ATP-binding spans 40–219; it reads LPLTLAGRDV…FEQMNNAEYI (180 aa). 53–60 contacts ATP; sequence AQTGTGKT. A DEAD box motif is present at residues 165-168; the sequence is DEAD. One can recognise a Helicase C-terminal domain in the interval 245–390; it reads RLLQTLIEEE…VSKYNPDALM (146 aa). The disordered stretch occupies residues 392 to 421; sequence DLPKPLRLTRPRTGNGPRRTGTPRNRRRSG. Over residues 402 to 414 the composition is skewed to low complexity; sequence PRTGNGPRRTGTP.

Belongs to the DEAD box helicase family. RhlB subfamily. As to quaternary structure, component of the RNA degradosome, which is a multiprotein complex involved in RNA processing and mRNA degradation.

The protein resides in the cytoplasm. The catalysed reaction is ATP + H2O = ADP + phosphate + H(+). Its function is as follows. DEAD-box RNA helicase involved in RNA degradation. Has RNA-dependent ATPase activity and unwinds double-stranded RNA. The protein is ATP-dependent RNA helicase RhlB of Escherichia coli O17:K52:H18 (strain UMN026 / ExPEC).